Consider the following 249-residue polypeptide: Isoprenyl transferase 1 (249 aa).

The active site involves Asp30. Asp30 provides a ligand contact to Mg(2+). Residues 31–34 (GNGR), Trp35, Arg43, His47, and 75–77 (STE) contribute to the substrate site. Asn78 acts as the Proton acceptor in catalysis. Substrate contacts are provided by residues Trp79, Arg81, Arg198, and 204 to 206 (RMS). Glu217 is a binding site for Mg(2+).

It belongs to the UPP synthase family. Homodimer. Requires Mg(2+) as cofactor.

Functionally, catalyzes the condensation of isopentenyl diphosphate (IPP) with allylic pyrophosphates generating different type of terpenoids. This Tropheryma whipplei (strain Twist) (Whipple's bacillus) protein is Isoprenyl transferase 1.